Here is a 459-residue protein sequence, read N- to C-terminus: FBD-associated F-box protein At4g13985 (459 aa).

Positions Val-18–Glu-64 constitute an F-box domain. The FBD domain occupies Lys-375–Leu-429.

In Arabidopsis thaliana (Mouse-ear cress), this protein is FBD-associated F-box protein At4g13985.